The sequence spans 410 residues: Probable 2,3-bisphosphoglycerate-independent phosphoglycerate mutase (410 aa).

This sequence belongs to the BPG-independent phosphoglycerate mutase family. A-PGAM subfamily.

It catalyses the reaction (2R)-2-phosphoglycerate = (2R)-3-phosphoglycerate. It participates in carbohydrate degradation; glycolysis; pyruvate from D-glyceraldehyde 3-phosphate: step 3/5. Its function is as follows. Catalyzes the interconversion of 2-phosphoglycerate and 3-phosphoglycerate. The polypeptide is Probable 2,3-bisphosphoglycerate-independent phosphoglycerate mutase (Deinococcus radiodurans (strain ATCC 13939 / DSM 20539 / JCM 16871 / CCUG 27074 / LMG 4051 / NBRC 15346 / NCIMB 9279 / VKM B-1422 / R1)).